A 4646-amino-acid polypeptide reads, in one-letter code: Cytoplasmic dynein 1 heavy chain 1 (4646 aa).

Serine 2 carries the N-acetylserine modification. The segment at 53 to 1867 (EAALEEKSAL…SIQMANAKFN (1815 aa)) is stem. At serine 70 the chain carries Phosphoserine. 3 coiled-coil regions span residues 181–202 (SVEKKIAELEMGLLHLQQNIEI), 455–478 (AHRKLQARLDQMRKFRRQHEQLRA), and 543–566 (TEAWEAAMKRYDERIDRVETRITA). Residues 448 to 703 (MVWRINPAHR…NTQEIFDDWA (256 aa)) are interaction with DYNC1I2. Positions 651 to 802 (AKQIDRQLTA…EKVEERNTIS (152 aa)) are interaction with DYNC1LI2. The residue at position 1125 (lysine 1125) is an N6-acetyllysine. Coiled-coil stretches lie at residues 1171-1252 (TYVQ…AVES) and 1357-1373 (RKLRQNLDALLNQLKSF). Serine 1230 is modified (phosphoserine). AAA stretches follow at residues 1868 to 2099 (YGFE…VLVS), 2180 to 2452 (EELK…LTRL), 2556 to 2805 (EVET…WVRG), and 2899 to 3168 (VFYE…GGRT). Residues 1906-1913 (GPAGTGKT) and 2224-2231 (GPSGSGKS) each bind ATP. The tract at residues 2390–2411 (GEDEAQRRRKGKEDEGEEAASP) is disordered. ATP contacts are provided by residues 2595–2602 (GPPGSGKT) and 2937–2944 (GVSGAGKT). 3 coiled-coil regions span residues 3189–3275 (EKRS…ADKQ), 3396–3500 (AIAQ…KNQM), and 3737–3800 (EFQL…VSQQ). The interval 3189 to 3500 (EKRSELEEQQ…KTSETFKNQM (312 aa)) is stalk. Lysine 3480 carries the post-translational modification N6-acetyllysine. AAA regions lie at residues 3553–3782 (LSNA…EVTR) and 4005–4221 (AHMF…TVDT). At serine 4162 the chain carries Phosphoserine. Lysine 4283 bears the N6-acetyllysine mark. Threonine 4366 is modified (phosphothreonine). Phosphoserine is present on serine 4368.

This sequence belongs to the dynein heavy chain family. Homodimer. The cytoplasmic dynein 1 complex consists of two catalytic heavy chains (HCs) and a number of non-catalytic subunits presented by intermediate chains (ICs), light intermediate chains (LICs) and light chains (LCs); the composition seems to vary in respect to the IC, LIC and LC composition. The heavy chain homodimer serves as a scaffold for the probable homodimeric assembly of the respective non-catalytic subunits. The ICs and LICs bind directly to the HC dimer and dynein LCs assemble on the IC dimer. Interacts with DYNC1LI1; DYNC1LI1 and DYNC1LI2 bind mutually exclusive to DYNC1H1. Interacts with DYNC1LI2; DYNC1LI1 and DYNC1LI2 bind mutually exclusive to DYNC1H1. Interacts with DYNC1I2. Interacts with BICD2. Interacts with isoform 2 of CRACR2A. Interacts with DNALI1.

Its subcellular location is the cytoplasm. It is found in the cytoskeleton. Functionally, cytoplasmic dynein 1 acts as a motor for the intracellular retrograde motility of vesicles and organelles along microtubules. Dynein has ATPase activity; the force-producing power stroke is thought to occur on release of ADP. Plays a role in mitotic spindle assembly and metaphase plate congression. The protein is Cytoplasmic dynein 1 heavy chain 1 of Homo sapiens (Human).